We begin with the raw amino-acid sequence, 322 residues long: Undecaprenyl-phosphate 4-deoxy-4-formamido-L-arabinose transferase (322 aa).

At 1–235 (MFEIHPVKKV…TCLTTTPLRM (235 aa)) the chain is on the cytoplasmic side. The helical transmembrane segment at 236–256 (LSLLGSIIAIGGFSIAVLLVI) threads the bilayer. Residues 257–269 (LRLTFGPQWAAEG) lie on the Periplasmic side of the membrane. Residues 270–290 (VFMLFAVLFTFIGAQFIGMGL) traverse the membrane as a helical segment. At 291-322 (LGEYIGRIYTDVRARPRYFVQQVIRPSSKENE) the chain is on the cytoplasmic side.

The protein belongs to the glycosyltransferase 2 family.

It localises to the cell inner membrane. The catalysed reaction is UDP-4-deoxy-4-formamido-beta-L-arabinose + di-trans,octa-cis-undecaprenyl phosphate = 4-deoxy-4-formamido-alpha-L-arabinopyranosyl di-trans,octa-cis-undecaprenyl phosphate + UDP. The protein operates within glycolipid biosynthesis; 4-amino-4-deoxy-alpha-L-arabinose undecaprenyl phosphate biosynthesis; 4-amino-4-deoxy-alpha-L-arabinose undecaprenyl phosphate from UDP-4-deoxy-4-formamido-beta-L-arabinose and undecaprenyl phosphate: step 1/2. It functions in the pathway bacterial outer membrane biogenesis; lipopolysaccharide biosynthesis. Its function is as follows. Catalyzes the transfer of 4-deoxy-4-formamido-L-arabinose from UDP to undecaprenyl phosphate. The modified arabinose is attached to lipid A and is required for resistance to polymyxin and cationic antimicrobial peptides. The sequence is that of Undecaprenyl-phosphate 4-deoxy-4-formamido-L-arabinose transferase from Shigella flexneri serotype 5b (strain 8401).